Here is an 823-residue protein sequence, read N- to C-terminus: Zygotic DNA replication licensing factor mcm6-A (823 aa).

The segment at 159–186 (CLDCQTLVRDVEQQFKYTQPSICRNPVC) adopts a C4-type zinc-finger fold. Positions 347–554 (LYHNLCTSLF…TDYAIARRIV (208 aa)) constitute an MCM domain. 397–404 (GDPSTAKS) serves as a coordination point for ATP. The short motif at 529–532 (SRFD) is the Arginine finger element. Residues 663-710 (PDVNLDQDDEHEPEDETQEGTNGDAEVPNGVNGHVNGINGHSQESNAA) form a disordered region. A compositionally biased stretch (acidic residues) spans 667 to 680 (LDQDDEHEPEDETQ). Positions 691–703 (NGVNGHVNGINGH) are enriched in low complexity.

The protein belongs to the MCM family. As to quaternary structure, component of the mcm2-7 complex (RLF-M). The complex forms a toroidal hexameric ring with the proposed subunit order mcm2-mcm6-mcm4-mcm7-mcm3-mcm5 (By simililarity). Begins to associate with zmcm3, mcm4 and mcm7 into mcm complexes at the neurula stage. May replace mmcm6 in the complex that functions during licensing of DNA replication.

It is found in the nucleus. The catalysed reaction is ATP + H2O = ADP + phosphate + H(+). In terms of biological role, acts as a component of the mcm2-7 complex (mcm complex) which is the putative replicative helicase essential for 'once per cell cycle' DNA replication initiation and elongation in eukaryotic cells. The active ATPase sites in the mcm2-7 ring are formed through the interaction surfaces of two neighboring subunits such that a critical structure of a conserved arginine finger motif is provided in trans relative to the ATP-binding site of the Walker A box of the adjacent subunit. The six ATPase active sites, however, are likely to contribute differentially to the complex helicase activity. The existence of maternal and zygotic forms of mcm3 and mcm6 suggests that specific forms of mcm2-7 complexes may be used during different stages of development. May replace mmcm6 in the mcm2-7 complex. In Xenopus laevis (African clawed frog), this protein is Zygotic DNA replication licensing factor mcm6-A (zmcm6-a).